A 444-amino-acid polypeptide reads, in one-letter code: UDP-N-acetylmuramoylalanine--D-glutamate ligase (444 aa).

Position 109–115 (G109–T115) interacts with ATP.

The protein belongs to the MurCDEF family.

Its subcellular location is the cytoplasm. The catalysed reaction is UDP-N-acetyl-alpha-D-muramoyl-L-alanine + D-glutamate + ATP = UDP-N-acetyl-alpha-D-muramoyl-L-alanyl-D-glutamate + ADP + phosphate + H(+). The protein operates within cell wall biogenesis; peptidoglycan biosynthesis. Its function is as follows. Cell wall formation. Catalyzes the addition of glutamate to the nucleotide precursor UDP-N-acetylmuramoyl-L-alanine (UMA). The polypeptide is UDP-N-acetylmuramoylalanine--D-glutamate ligase (Bacteroides thetaiotaomicron (strain ATCC 29148 / DSM 2079 / JCM 5827 / CCUG 10774 / NCTC 10582 / VPI-5482 / E50)).